The following is a 348-amino-acid chain: Holliday junction branch migration complex subunit RuvB (348 aa).

The interval 4–186 (TDRIISANTA…FGIIQRLEFY (183 aa)) is large ATPase domain (RuvB-L). Residues isoleucine 25, arginine 26, glycine 67, lysine 70, threonine 71, threonine 72, 133–135 (EDY), arginine 176, tyrosine 186, and arginine 223 contribute to the ATP site. Position 71 (threonine 71) interacts with Mg(2+). A small ATPAse domain (RuvB-S) region spans residues 187–257 (SIDDLSKIVY…IADKALSMLK (71 aa)). A head domain (RuvB-H) region spans residues 260–348 (PVGFDHMDHR…SADQQQTLSI (89 aa)). Residues arginine 315 and arginine 320 each contribute to the DNA site.

Belongs to the RuvB family. As to quaternary structure, homohexamer. Forms an RuvA(8)-RuvB(12)-Holliday junction (HJ) complex. HJ DNA is sandwiched between 2 RuvA tetramers; dsDNA enters through RuvA and exits via RuvB. An RuvB hexamer assembles on each DNA strand where it exits the tetramer. Each RuvB hexamer is contacted by two RuvA subunits (via domain III) on 2 adjacent RuvB subunits; this complex drives branch migration. In the full resolvosome a probable DNA-RuvA(4)-RuvB(12)-RuvC(2) complex forms which resolves the HJ.

Its subcellular location is the cytoplasm. The enzyme catalyses ATP + H2O = ADP + phosphate + H(+). In terms of biological role, the RuvA-RuvB-RuvC complex processes Holliday junction (HJ) DNA during genetic recombination and DNA repair, while the RuvA-RuvB complex plays an important role in the rescue of blocked DNA replication forks via replication fork reversal (RFR). RuvA specifically binds to HJ cruciform DNA, conferring on it an open structure. The RuvB hexamer acts as an ATP-dependent pump, pulling dsDNA into and through the RuvAB complex. RuvB forms 2 homohexamers on either side of HJ DNA bound by 1 or 2 RuvA tetramers; 4 subunits per hexamer contact DNA at a time. Coordinated motions by a converter formed by DNA-disengaged RuvB subunits stimulates ATP hydrolysis and nucleotide exchange. Immobilization of the converter enables RuvB to convert the ATP-contained energy into a lever motion, pulling 2 nucleotides of DNA out of the RuvA tetramer per ATP hydrolyzed, thus driving DNA branch migration. The RuvB motors rotate together with the DNA substrate, which together with the progressing nucleotide cycle form the mechanistic basis for DNA recombination by continuous HJ branch migration. Branch migration allows RuvC to scan DNA until it finds its consensus sequence, where it cleaves and resolves cruciform DNA. The chain is Holliday junction branch migration complex subunit RuvB from Francisella tularensis subsp. tularensis (strain FSC 198).